The primary structure comprises 541 residues: Major facilitator-type transporter ecdD (541 aa).

The chain crosses the membrane as a helical span at residues 15–35; the sequence is AWPAILISGFVAFGGILFGYD. An N-linked (GlcNAc...) asparagine glycan is attached at N64. Transmembrane regions (helical) follow at residues 72-92, 106-126, 129-149, and 156-176; these read AIVS…SPMG, GIFV…PFLA, FFAG…QSET, and GFIV…ASVL. 2 N-linked (GlcNAc...) asparagine glycosylation sites follow: N178 and N184. Residues 191 to 211 form a helical membrane-spanning segment; sequence IPIAVQFAWSIILVGGMLILP. N253 is a glycosylation site (N-linked (GlcNAc...) asparagine). Helical transmembrane passes span 277 to 297, 313 to 333, 340 to 360, 384 to 404, 418 to 440, and 454 to 474; these read LVTG…FIMY, VITL…LYAI, PVLL…AVLG, IAFI…SAWV, SLSM…TPYL, and IFFI…FMIY.

This sequence belongs to the major facilitator superfamily. Sugar transporter (TC 2.A.1.1) family.

It is found in the membrane. The sequence is that of Major facilitator-type transporter ecdD from Aspergillus rugulosus (Emericella rugulosa).